A 456-amino-acid polypeptide reads, in one-letter code: Bifunctional protein GlmU (456 aa).

The segment at 1–228 (MTLPLHVLIL…PQDVEGANDP (228 aa)) is pyrophosphorylase. UDP-N-acetyl-alpha-D-glucosamine is bound by residues 10–13 (LAAG), Lys-24, Gln-76, 81–82 (GT), 103–105 (YGD), Gly-138, Glu-153, Asn-168, and Asn-226. Asp-105 is a Mg(2+) binding site. Asn-226 serves as a coordination point for Mg(2+). The linker stretch occupies residues 229–249 (WQLAQLERAWQLRAARTLCLQ). The segment at 250 to 456 (GVRMADPARV…GWKRPTKKSP (207 aa)) is N-acetyltransferase. Arg-332 and Lys-350 together coordinate UDP-N-acetyl-alpha-D-glucosamine. The active-site Proton acceptor is His-362. UDP-N-acetyl-alpha-D-glucosamine is bound by residues Tyr-365 and Asn-376. Acetyl-CoA-binding positions include Ala-379, 385–386 (NY), Ser-404, Ala-422, and Arg-439.

It in the N-terminal section; belongs to the N-acetylglucosamine-1-phosphate uridyltransferase family. In the C-terminal section; belongs to the transferase hexapeptide repeat family. Homotrimer. Requires Mg(2+) as cofactor.

The protein localises to the cytoplasm. The enzyme catalyses alpha-D-glucosamine 1-phosphate + acetyl-CoA = N-acetyl-alpha-D-glucosamine 1-phosphate + CoA + H(+). It catalyses the reaction N-acetyl-alpha-D-glucosamine 1-phosphate + UTP + H(+) = UDP-N-acetyl-alpha-D-glucosamine + diphosphate. It functions in the pathway nucleotide-sugar biosynthesis; UDP-N-acetyl-alpha-D-glucosamine biosynthesis; N-acetyl-alpha-D-glucosamine 1-phosphate from alpha-D-glucosamine 6-phosphate (route II): step 2/2. It participates in nucleotide-sugar biosynthesis; UDP-N-acetyl-alpha-D-glucosamine biosynthesis; UDP-N-acetyl-alpha-D-glucosamine from N-acetyl-alpha-D-glucosamine 1-phosphate: step 1/1. Its pathway is bacterial outer membrane biogenesis; LPS lipid A biosynthesis. Catalyzes the last two sequential reactions in the de novo biosynthetic pathway for UDP-N-acetylglucosamine (UDP-GlcNAc). The C-terminal domain catalyzes the transfer of acetyl group from acetyl coenzyme A to glucosamine-1-phosphate (GlcN-1-P) to produce N-acetylglucosamine-1-phosphate (GlcNAc-1-P), which is converted into UDP-GlcNAc by the transfer of uridine 5-monophosphate (from uridine 5-triphosphate), a reaction catalyzed by the N-terminal domain. This chain is Bifunctional protein GlmU, found in Xanthomonas axonopodis pv. citri (strain 306).